Reading from the N-terminus, the 68-residue chain is uncharacterized protein (68 aa).

This is an uncharacterized protein from Caenorhabditis elegans.